Reading from the N-terminus, the 249-residue chain is MSDSASPIFVEYRNTDLLLSPSSAHVYYLPVSSDKHIMLTASTTMGAVPLTTSTTPLVSSTVHQTVFRLRFDSAVTRLTPVTTTTSVTTGTLPWYIYQTPLVEIINTTRVTIGAPYDCDGFFWGRELRPNPDISGVGVVFAFMLSAWLVWLITVYAFARGQIDASQVTSADTRFFRVQVKSSGWRWSSVFLRAILVFSDQQLVTGIAIMIATFASCQDISVWHYAFAVSLAWVSHQHYCSLKTQHCVLD.

N-linked (GlcNAc...) asparagine glycosylation is present at N106. The helical transmembrane segment at 138 to 158 (VVFAFMLSAWLVWLITVYAFA) threads the bilayer.

The protein localises to the membrane. Part of the gene cluster that mediates the biosynthesis of elsinochromes, pigments consisting of at least four interconvertible tautomers (A, B, C and D) that have a core phenolic quinone to which various side chains are attached and which play an important role in fungal pathogenesis. The non-reducing polyketide synthase PKS1 was proposed to iteratively catalyze decarboxylation between acetyl-CoA and malonyl-CoA subunits for polyketide chain elongation. The released polyketide undergoes cyclization to form an aromatic ring, and proceeds via serial modification steps to produce the heptaketide back- bone of elsinochrome. As elsinochrome has a symmetrical structure, two identical heptaketides are fused to form a core 1,2-dihydrobenzo-perylene ring structure, which can then be successively modified to produce the various derivatives of elsinochrome. Some of these reactions may be cooperatively carried out, at least in part, by the products of RDT1, OXR1 and PKS1. PRF1, embedded within the elsinochrome cluster possibly functions to stabilize some of the biosynthetic enzymes required for elsinochrome production. As prefoldin is a hexamer containing 2 a and 4 b subunits, additional prefoldin subunits, whose coding genes may not immediately link to the elsinochrome biosynthetic gene cluster, are required to fulfill the chaperone function. In addition, no methyltransferase-coding gene exists within the biosynthetic gene cluster, even though elsinochrome has four methyl groups at positions C3, C7, C8 and C12. Apparently, the identified gene cluster does not contain the entire entourage of genes responsible for elsinochrome biosynthesis. Once elsinochrome is synthesized, it must be exported outside the fungal cells, which is probably accomplished by the ECT1 transporter, to avoid toxicity. The protein is Elsinochromes biosynthesis cluster protein HP3 of Elsinoe fawcettii (Citrus scab fungus).